A 469-amino-acid polypeptide reads, in one-letter code: Phosphatidylcholine:ceramide cholinephosphotransferase 1 (469 aa).

A disordered region spans residues 40-177; the sequence is TTKIGPKLET…GDKPASPHDR (138 aa). 3 stretches are compositionally biased toward basic and acidic residues: residues 72–91, 100–117, and 162–177; these read AAEK…HEET, SHHD…GDGK, and VRLE…PHDR. 6 helical membrane passes run 186–206, 231–251, 262–282, 300–320, 327–347, and 355–375; these read LVAF…LSWI, LRLC…LILF, LCFI…VTPV, TFSL…LNLF, LCGD…ALFI, and FYIL…FLVL. His336 is an active-site residue. The Cytoplasmic portion of the chain corresponds to 376–469; the sequence is SHGHYTIDVI…RNGAARPAFE (94 aa). Residues His379 and Asp383 contribute to the active site.

This sequence belongs to the sphingomyelin synthase family.

The protein localises to the golgi apparatus membrane. The enzyme catalyses an N-acylsphing-4-enine + a 1,2-diacyl-sn-glycero-3-phosphocholine = a sphingomyelin + a 1,2-diacyl-sn-glycerol. It carries out the reaction an N-acyl-15-methylhexadecasphing-4-enine + a 1,2-diacyl-sn-glycero-3-phosphocholine = an N-acyl-15-methylhexadecasphing-4-enine-1-phosphocholine + a 1,2-diacyl-sn-glycerol. It functions in the pathway lipid metabolism; sphingolipid metabolism. Functionally, sphingomyelin synthases (SM synthase or SMS) synthesize the sphingolipid sphingomyelin (SM) through transfer of the phosphatidyl head group of 1,2-diacyl-sn-glycero-3-phosphocholine (phosphatidylcholine, PC) on to the primary hydroxyl of ceramide (N-acylsphingoid base), yielding 1,2-diacyl-sn-glycerol (diacylglycerol, DAG) as a side product. Functions as a bidirectional lipid cholinephosphotransferases capable of converting PC and ceramide to SM and DAG and vice versa depending on the respective levels of ceramide and DAG as phosphocholine acceptors, respectively. The chain is Phosphatidylcholine:ceramide cholinephosphotransferase 1 (sms-1) from Caenorhabditis elegans.